Consider the following 429-residue polypeptide: Enolase (429 aa).

Gln165 serves as a coordination point for (2R)-2-phosphoglycerate. Glu207 acts as the Proton donor in catalysis. Residues Asp244, Glu287, and Asp314 each coordinate Mg(2+). 4 residues coordinate (2R)-2-phosphoglycerate: Lys339, Arg368, Ser369, and Lys390. Catalysis depends on Lys339, which acts as the Proton acceptor.

The protein belongs to the enolase family. It depends on Mg(2+) as a cofactor.

The protein localises to the cytoplasm. The protein resides in the secreted. It localises to the cell surface. The enzyme catalyses (2R)-2-phosphoglycerate = phosphoenolpyruvate + H2O. The protein operates within carbohydrate degradation; glycolysis; pyruvate from D-glyceraldehyde 3-phosphate: step 4/5. Catalyzes the reversible conversion of 2-phosphoglycerate (2-PG) into phosphoenolpyruvate (PEP). It is essential for the degradation of carbohydrates via glycolysis. The sequence is that of Enolase from Roseiflexus sp. (strain RS-1).